We begin with the raw amino-acid sequence, 532 residues long: Vesicular acetylcholine transporter unc-17 (532 aa).

Residues 1–31 lie on the Cytoplasmic side of the membrane; sequence MGFNVPVINRDSEILKADAKKWLEQQDNQKK. The chain crosses the membrane as a helical span at residues 32-52; that stretch reads CVLVIVSIALLLDNMLYMVIV. Topologically, residues 53-101 are lumenal, vesicle; the sequence is PIIPKYLRDIHNYQVTFEGYHNETSQLANGTYLVREVGGRINFLDEELE. Residues asparagine 74 and asparagine 81 are each glycosylated (N-linked (GlcNAc...) asparagine). The chain crosses the membrane as a helical span at residues 102–121; that stretch reads LGWLFASKALLQIFVNPFSG. The Cytoplasmic segment spans residues 122–130; that stretch reads YIIDRVGYE. Residues 131 to 151 traverse the membrane as a helical segment; it reads IPMILGLCTMFFSTAIFALGK. Residues 152-160 are Lumenal, vesicle-facing; the sequence is SYGVLLFAR. A helical transmembrane segment spans residues 161–180; sequence SLQGFGSAFADTSGLAMIAD. The Cytoplasmic segment spans residues 181–191; that stretch reads RFTEENERSAA. A helical membrane pass occupies residues 192 to 213; it reads LGIALAFISFGCLVAPPFGSVL. The Lumenal, vesicle portion of the chain corresponds to 214 to 219; it reads YSLAGK. The helical transmembrane segment at 220–242 threads the bilayer; sequence PVPFLILSFVCLADAIAVFMVIN. Residues 243 to 266 are Cytoplasmic-facing; sequence PHRRGTDSHGEKVQGTPMWRLFMD. Residues 267 to 286 traverse the membrane as a helical segment; that stretch reads PFIACCSGALIMANVSLAFL. Residues 287–303 lie on the Lumenal, vesicle side of the membrane; it reads EPTITTWMSEMMPDTPG. A helical transmembrane segment spans residues 304 to 328; that stretch reads WLVGVIWLPPFFPHVLGVYVTVKML. Residues 329–335 lie on the Cytoplasmic side of the membrane; it reads RAFPHHT. Residues 336 to 356 traverse the membrane as a helical segment; the sequence is WAIAMVGLAMEGIACFAIPYT. Residues 357–367 lie on the Lumenal, vesicle side of the membrane; that stretch reads TSVMQLVIPLS. The helical transmembrane segment at 368 to 388 threads the bilayer; sequence FVCFGIALIDTSLLPMLGHLV. The Cytoplasmic portion of the chain corresponds to 389-393; that stretch reads DTRHV. Residues 394–412 traverse the membrane as a helical segment; sequence SVYGSVYAIADISYSLAYA. Over 413-418 the chain is Lumenal, vesicle; the sequence is FGPIIA. A helical membrane pass occupies residues 419 to 440; it reads GWIVTNWGFTALNIIIFATNVT. At 441-532 the chain is on the cytoplasmic side; the sequence is YAPVLFLLRK…AGYDPLNPQW (92 aa).

This sequence belongs to the major facilitator superfamily. Vesicular transporter family. Detected in most regions of the nervous system including the nerve ring, the ventral and dorsal nerve cords, and the pharyngeal nervous system. Expressed in most cholinergic neurons. In addition, expressed in SIA, SIB and SMB sublateral motor neurons.

It localises to the cytoplasmic vesicle. Its subcellular location is the secretory vesicle. The protein resides in the synaptic vesicle membrane. Its function is as follows. Involved in acetylcholine transport into synaptic vesicles. This chain is Vesicular acetylcholine transporter unc-17, found in Caenorhabditis elegans.